The sequence spans 65 residues: Conotoxin Bu19 (65 aa).

The signal sequence occupies residues 1-21 (MGMRMVFTVFLLVVLATTVVS). A propeptide spanning residues 22–48 (FTSDRASDGRNAAANDKASDLAALAVR) is cleaved from the precursor. Intrachain disulfides connect cysteine 50–cysteine 56 and cysteine 51–cysteine 64. A Cysteine amide modification is found at cysteine 64.

This sequence belongs to the conotoxin A superfamily. Expressed by the venom duct.

The protein localises to the secreted. The polypeptide is Conotoxin Bu19 (Conus bullatus (Bubble cone)).